The sequence spans 74 residues: ATP synthase subunit c (74 aa).

A run of 2 helical transmembrane segments spans residues 8–28 (FIGV…VSNI) and 52–72 (IGAG…MLLI).

Belongs to the ATPase C chain family. In terms of assembly, F-type ATPases have 2 components, F(1) - the catalytic core - and F(0) - the membrane proton channel. F(1) has five subunits: alpha(3), beta(3), gamma(1), delta(1), epsilon(1). F(0) has three main subunits: a(1), b(2) and c(10-14). The alpha and beta chains form an alternating ring which encloses part of the gamma chain. F(1) is attached to F(0) by a central stalk formed by the gamma and epsilon chains, while a peripheral stalk is formed by the delta and b chains.

It is found in the cell inner membrane. F(1)F(0) ATP synthase produces ATP from ADP in the presence of a proton or sodium gradient. F-type ATPases consist of two structural domains, F(1) containing the extramembraneous catalytic core and F(0) containing the membrane proton channel, linked together by a central stalk and a peripheral stalk. During catalysis, ATP synthesis in the catalytic domain of F(1) is coupled via a rotary mechanism of the central stalk subunits to proton translocation. In terms of biological role, key component of the F(0) channel; it plays a direct role in translocation across the membrane. A homomeric c-ring of between 10-14 subunits forms the central stalk rotor element with the F(1) delta and epsilon subunits. The chain is ATP synthase subunit c from Rickettsia canadensis (strain McKiel).